A 337-amino-acid polypeptide reads, in one-letter code: Large ribosomal subunit protein uL3 (337 aa).

It belongs to the universal ribosomal protein uL3 family. Part of the 50S ribosomal subunit. Forms a cluster with proteins L14 and L24e.

Its function is as follows. One of the primary rRNA binding proteins, it binds directly near the 3'-end of the 23S rRNA, where it nucleates assembly of the 50S subunit. This is Large ribosomal subunit protein uL3 from Methanosphaerula palustris (strain ATCC BAA-1556 / DSM 19958 / E1-9c).